A 162-amino-acid chain; its full sequence is Interleukin-15 (162 aa).

The N-terminal stretch at 1 to 29 (MRISKPHLRITSIQCYVCLLLNTHFLTEA) is a signal peptide. A propeptide spanning residues 30–48 (GIRVFILGCISAGIPKTEA) is cleaved from the precursor. 2 cysteine pairs are disulfide-bonded: Cys-83-Cys-133 and Cys-90-Cys-136. N-linked (GlcNAc...) asparagine glycans are attached at residues Asn-119, Asn-127, and Asn-143.

The protein belongs to the IL-15/IL-21 family.

It is found in the secreted. In terms of biological role, cytokine that plays a major role in the development of inflammatory and protective immune responses to microbial invaders and parasites by modulating immune cells of both the innate and adaptive immune systems. Stimulates the proliferation of natural killer cells, T-cells and B-cells and promotes the secretion of several cytokines. In monocytes, induces the production of IL8 and monocyte chemotactic protein 1/CCL2, two chemokines that attract neutrophils and monocytes respectively to sites of infection. Unlike most cytokines, which are secreted in soluble form, IL15 is expressed in association with its high affinity IL15RA on the surface of IL15-producing cells and delivers signals to target cells that express IL2RB and IL2RG receptor subunits. Binding to its receptor triggers the phosphorylation of JAK1 and JAK3 and the recruitment and subsequent phosphorylation of signal transducer and activator of transcription-3/STAT3 and STAT5. In mast cells, induces the rapid tyrosine phosphorylation of STAT6 and thereby controls mast cell survival and release of cytokines such as IL4. The chain is Interleukin-15 (IL15) from Marmota monax (Woodchuck).